The primary structure comprises 505 residues: MSEQQPQGAEQALDLNNELQSRREKLAALRENGIAFPNDFRRDTTSDKLHAAYGDKDNEELEALGVEVTVAGRMMTRRIMGKASFVTLQDVGGRIQLYVARDDLAEGVYNEEFKKWDLGDILGARGKLFKTKTGELSIHCTELRLLTKALRPLPDKFHGLADQETRYRQRYLDLIANDESRKTFQVRSQIMAAMRNFMVERGFMEVETPMMQVIPGGASARPFVTHHNALDIDMYLRIAPELYLKRLVVGGFERVFEINRNFRNEGVSPRHNPEFTMMELYMAYADYKDLIELTESLFRTLTQNVLGNTQVQYGDEVFDFGKPFVKLTMTEAIKKYRPETDLADLADMGKAVAIAESIGIKVEKSWGLGRVVTEIFEEVAESHLIQPTFITEYPAEVSPLARRNDVNPEITDRFEFFIGGREIGNGFSELNDAEDQAQRFADQANAKDAGDDEAMFYDEDYVTALEHGLPPTAGLGIGIDRMVMLFTNSHTIRDVILFPAMRPQK.

Mg(2+) contacts are provided by E415 and E422.

The protein belongs to the class-II aminoacyl-tRNA synthetase family. As to quaternary structure, homodimer. Requires Mg(2+) as cofactor.

It localises to the cytoplasm. It carries out the reaction tRNA(Lys) + L-lysine + ATP = L-lysyl-tRNA(Lys) + AMP + diphosphate. This is Lysine--tRNA ligase from Serratia proteamaculans (strain 568).